A 450-amino-acid chain; its full sequence is Phosphoglucosamine mutase (450 aa).

The active-site Phosphoserine intermediate is the S102. Mg(2+)-binding residues include S102, D243, D245, and D247. S102 carries the phosphoserine modification.

The protein belongs to the phosphohexose mutase family. Mg(2+) serves as cofactor. In terms of processing, activated by phosphorylation.

The catalysed reaction is alpha-D-glucosamine 1-phosphate = D-glucosamine 6-phosphate. Its function is as follows. Catalyzes the conversion of glucosamine-6-phosphate to glucosamine-1-phosphate. The chain is Phosphoglucosamine mutase from Agrobacterium fabrum (strain C58 / ATCC 33970) (Agrobacterium tumefaciens (strain C58)).